Here is a 118-residue protein sequence, read N- to C-terminus: Large ribosomal subunit protein uL24 (118 aa).

It belongs to the universal ribosomal protein uL24 family. Part of the 50S ribosomal subunit.

In terms of biological role, one of two assembly initiator proteins, it binds directly to the 5'-end of the 23S rRNA, where it nucleates assembly of the 50S subunit. Functionally, one of the proteins that surrounds the polypeptide exit tunnel on the outside of the subunit. This is Large ribosomal subunit protein uL24 from Prochlorococcus marinus (strain MIT 9215).